Reading from the N-terminus, the 317-residue chain is Melanocyte-stimulating hormone receptor (317 aa).

The Extracellular portion of the chain corresponds to 1–37; sequence MPVQGSQRRLLGSLNSTPTATPRLGLAANQTGARCLE. N-linked (GlcNAc...) asparagine glycosylation is present at Asn-29. A helical membrane pass occupies residues 38-63; sequence VSIPDGLFLSLGLVSLVENVLVVVAI. Over 64-72 the chain is Cytoplasmic; it reads ARNRNLHSP. A helical membrane pass occupies residues 73–93; that stretch reads MYCFICCLALSDLLVSGSNML. The Extracellular portion of the chain corresponds to 94-118; sequence ETAVFLLLEAGALAARAAVVQQLDN. Residues 119–140 form a helical membrane-spanning segment; it reads VIDVITCSSMLSSLCFLGAIAV. Over 141–163 the chain is Cytoplasmic; that stretch reads DRYISIFYALRYHSIVTLRRARR. The chain crosses the membrane as a helical span at residues 164-183; the sequence is VVAAIWVASVLFSTLFIAYC. Residues 184–191 lie on the Extracellular side of the membrane; the sequence is DHAAVLLC. Residues 192–211 form a helical membrane-spanning segment; sequence LVVFFLAMLVLMAVLYVHML. Over 212 to 240 the chain is Cytoplasmic; sequence ARACQHAQGIAQLHKRQRPAHQGVGLKGA. Residues 241 to 266 form a helical membrane-spanning segment; it reads ATLTILLGIFFLCWGPFFLHLTLIVL. Topologically, residues 267 to 279 are extracellular; sequence CPQHPTCSCIFKN. A helical transmembrane segment spans residues 280–300; it reads FNLFLTLIICNAIIDPLIYAF. Over 301–317 the chain is Cytoplasmic; that stretch reads RSQELRRTLKKVLLCSW. A lipid anchor (S-palmitoyl cysteine) is attached at Cys-315.

Belongs to the G-protein coupled receptor 1 family. As to quaternary structure, interacts with MGRN1, but does not undergo MGRN1-mediated ubiquitination; this interaction competes with GNAS-binding and thus inhibits agonist-induced cAMP production. Interacts with OPN3; the interaction results in a decrease in MC1R-mediated cAMP signaling and ultimately a decrease in melanin production in melanocytes.

It is found in the cell membrane. Its function is as follows. Receptor for MSH (alpha, beta and gamma) and ACTH. The activity of this receptor is mediated by G proteins which activate adenylate cyclase. Mediates melanogenesis, the production of eumelanin (black/brown) and phaeomelanin (red/yellow), via regulation of cAMP signaling in melanocytes. The polypeptide is Melanocyte-stimulating hormone receptor (MC1R) (Trachypithecus obscurus (Dusky leaf-monkey)).